We begin with the raw amino-acid sequence, 1428 residues long: DNA topoisomerase 2 (1428 aa).

ATP-binding positions include N70, N99, S127–N129, and G140–K147. The interaction with DNA stretch occupies residues K333 to K336. Q365–K367 is a binding site for ATP. The 115-residue stretch at C443 to L557 folds into the Toprim domain. The Mg(2+) site is built by E449, D526, and D528. One can recognise a Topo IIA-type catalytic domain in the interval I692–L1159. Y782 serves as the catalytic O-(5'-phospho-DNA)-tyrosine intermediate. An interaction with DNA region spans residues K965–N974. Disordered regions lie at residues K1083 to V1102, A1176 to K1217, K1240 to K1288, and M1303 to D1428. T1086 carries the phosphothreonine; by CK2 modification. S1087 bears the Phosphoserine; by CK2 mark. Over residues K1207 to K1217 the composition is skewed to basic residues. S1252 bears the Phosphoserine mark. Residue T1258 is modified to Phosphothreonine; by CK2. S1266, S1269, and S1272 each carry phosphoserine; by CK2. Residues D1275–L1286 are compositionally biased toward basic and acidic residues. The segment covering T1332–Q1347 has biased composition (basic residues). Phosphoserine; by CK2 occurs at positions 1353, 1356, 1408, and 1423. The span at E1403–D1428 shows a compositional bias: acidic residues.

The protein belongs to the type II topoisomerase family. As to quaternary structure, homodimer. It depends on Mg(2+) as a cofactor. Mn(2+) serves as cofactor. Ca(2+) is required as a cofactor. Post-translationally, phosphorylation enhances the activity. Stimulates decatenation activity.

The protein resides in the nucleus. It carries out the reaction ATP-dependent breakage, passage and rejoining of double-stranded DNA.. In terms of biological role, control of topological states of DNA by transient breakage and subsequent rejoining of DNA strands. Topoisomerase II makes double-strand breaks. Essential during mitosis and meiosis for proper segregation of daughter chromosomes. This chain is DNA topoisomerase 2 (TOP2), found in Saccharomyces cerevisiae (strain ATCC 204508 / S288c) (Baker's yeast).